The following is a 42-amino-acid chain: Cytochrome b6-f complex subunit 7 (42 aa).

A helical membrane pass occupies residues 15–35 (IVTAAVTCIFMVLFGLSLGFA).

It belongs to the PetM family. The 4 large subunits of the cytochrome b6-f complex are cytochrome b6, subunit IV (17 kDa polypeptide, PetD), cytochrome f and the Rieske protein, while the 4 small subunits are PetG, PetL, PetM and PetN. The complex functions as a dimer.

The protein localises to the plastid. Its subcellular location is the chloroplast thylakoid membrane. Functionally, component of the cytochrome b6-f complex, which mediates electron transfer between photosystem II (PSII) and photosystem I (PSI), cyclic electron flow around PSI, and state transitions. The sequence is that of Cytochrome b6-f complex subunit 7 from Trieres chinensis (Marine centric diatom).